The following is a 218-amino-acid chain: Probable nicotinate-nucleotide adenylyltransferase (218 aa).

It belongs to the NadD family.

It catalyses the reaction nicotinate beta-D-ribonucleotide + ATP + H(+) = deamido-NAD(+) + diphosphate. The protein operates within cofactor biosynthesis; NAD(+) biosynthesis; deamido-NAD(+) from nicotinate D-ribonucleotide: step 1/1. Functionally, catalyzes the reversible adenylation of nicotinate mononucleotide (NaMN) to nicotinic acid adenine dinucleotide (NaAD). The protein is Probable nicotinate-nucleotide adenylyltransferase of Corynebacterium glutamicum (strain ATCC 13032 / DSM 20300 / JCM 1318 / BCRC 11384 / CCUG 27702 / LMG 3730 / NBRC 12168 / NCIMB 10025 / NRRL B-2784 / 534).